A 522-amino-acid polypeptide reads, in one-letter code: Protein nucleotidyltransferase YdiU (522 aa).

Gly-109, Gly-111, Arg-112, Lys-132, Asp-144, Gly-145, Arg-195, and Arg-202 together coordinate ATP. Residue Asp-271 is the Proton acceptor of the active site. Mg(2+)-binding residues include Asn-272 and Asp-281. Asp-281 is a binding site for ATP.

Belongs to the SELO family. The cofactor is Mg(2+). It depends on Mn(2+) as a cofactor.

It catalyses the reaction L-seryl-[protein] + ATP = 3-O-(5'-adenylyl)-L-seryl-[protein] + diphosphate. The catalysed reaction is L-threonyl-[protein] + ATP = 3-O-(5'-adenylyl)-L-threonyl-[protein] + diphosphate. It carries out the reaction L-tyrosyl-[protein] + ATP = O-(5'-adenylyl)-L-tyrosyl-[protein] + diphosphate. The enzyme catalyses L-histidyl-[protein] + UTP = N(tele)-(5'-uridylyl)-L-histidyl-[protein] + diphosphate. It catalyses the reaction L-seryl-[protein] + UTP = O-(5'-uridylyl)-L-seryl-[protein] + diphosphate. The catalysed reaction is L-tyrosyl-[protein] + UTP = O-(5'-uridylyl)-L-tyrosyl-[protein] + diphosphate. Its function is as follows. Nucleotidyltransferase involved in the post-translational modification of proteins. It can catalyze the addition of adenosine monophosphate (AMP) or uridine monophosphate (UMP) to a protein, resulting in modifications known as AMPylation and UMPylation. The chain is Protein nucleotidyltransferase YdiU from Burkholderia lata (strain ATCC 17760 / DSM 23089 / LMG 22485 / NCIMB 9086 / R18194 / 383).